The sequence spans 533 residues: NAD(P)H-quinone oxidoreductase chain 4 2 (533 aa).

14 helical membrane-spanning segments follow: residues Phe5–Leu25, Val33–Trp53, Leu86–Trp106, Leu114–Asp134, Leu135–Ile155, Phe168–Phe188, Ala208–Phe228, Ser242–Ile262, Phe276–Phe296, Ile310–Gly330, Ala331–Val351, Ala384–Leu404, Val416–Met436, and Thr462–Ala482.

It belongs to the complex I subunit 4 family.

Its subcellular location is the cellular thylakoid membrane. It catalyses the reaction a plastoquinone + NADH + (n+1) H(+)(in) = a plastoquinol + NAD(+) + n H(+)(out). The catalysed reaction is a plastoquinone + NADPH + (n+1) H(+)(in) = a plastoquinol + NADP(+) + n H(+)(out). In terms of biological role, NDH-1 shuttles electrons from NAD(P)H, via FMN and iron-sulfur (Fe-S) centers, to quinones in the respiratory chain. The immediate electron acceptor for the enzyme in this species is believed to be plastoquinone. Couples the redox reaction to proton translocation (for every two electrons transferred, four hydrogen ions are translocated across the cytoplasmic membrane), and thus conserves the redox energy in a proton gradient. This is NAD(P)H-quinone oxidoreductase chain 4 2 from Thermosynechococcus vestitus (strain NIES-2133 / IAM M-273 / BP-1).